The sequence spans 228 residues: Leucokinins (228 aa).

Positions 1–18 (MAMLLQVALPLLAAVSWG) are cleaved as a signal peptide. Residues 19–164 (WELNENDDSL…PRFSPVSAIQ (146 aa)) constitute a propeptide that is removed on maturation. A disordered region spans residues 80 to 118 (EFSENNEAEDKSPTSAQNTQEHIPGNNFPPPAASNPPVN). Glycine amide is present on residues Gly-180 and Gly-193. The propeptide occupies 197-209 (NTGRVHRQPKVVI). At Gly-217 the chain carries Glycine amide. The propeptide occupies 221–228 (NQKDDNVF).

It is found in the secreted. In terms of biological role, stimulates both fluid secretion by the Malpighian tubules and hindgut contractions. Depolarize the transepithelial voltage of the Malpighian tubules in concentrations of less than 10(-9) M and increase the frequency of hindgut contractions at concentrations above 10(-8) M. The protein is Leucokinins of Aedes aegypti (Yellowfever mosquito).